A 432-amino-acid polypeptide reads, in one-letter code: Glutamyl-tRNA reductase (432 aa).

Substrate-binding positions include 55–58 (TCNR), serine 114, 119–121 (ETQ), and glutamine 125. The active-site Nucleophile is cysteine 56. 194–199 (GAGEMI) contacts NADP(+).

This sequence belongs to the glutamyl-tRNA reductase family. As to quaternary structure, homodimer.

It carries out the reaction (S)-4-amino-5-oxopentanoate + tRNA(Glu) + NADP(+) = L-glutamyl-tRNA(Glu) + NADPH + H(+). Its pathway is porphyrin-containing compound metabolism; protoporphyrin-IX biosynthesis; 5-aminolevulinate from L-glutamyl-tRNA(Glu): step 1/2. Its function is as follows. Catalyzes the NADPH-dependent reduction of glutamyl-tRNA(Glu) to glutamate 1-semialdehyde (GSA). The protein is Glutamyl-tRNA reductase of Burkholderia orbicola (strain AU 1054).